The sequence spans 328 residues: Methionyl-tRNA formyltransferase (328 aa).

Ser-110–Pro-113 is a binding site for (6S)-5,6,7,8-tetrahydrofolate.

It belongs to the Fmt family.

It carries out the reaction L-methionyl-tRNA(fMet) + (6R)-10-formyltetrahydrofolate = N-formyl-L-methionyl-tRNA(fMet) + (6S)-5,6,7,8-tetrahydrofolate + H(+). Functionally, attaches a formyl group to the free amino group of methionyl-tRNA(fMet). The formyl group appears to play a dual role in the initiator identity of N-formylmethionyl-tRNA by promoting its recognition by IF2 and preventing the misappropriation of this tRNA by the elongation apparatus. This chain is Methionyl-tRNA formyltransferase, found in Prochlorococcus marinus (strain AS9601).